Reading from the N-terminus, the 222-residue chain is Beta-casein (222 aa).

Positions 1–15 (MKVLILACLVALAIA) are cleaved as a signal peptide. Residue Thr-27 is modified to Phosphothreonine. A phosphoserine mark is found at Ser-30, Ser-32, Ser-33, and Ser-34.

It belongs to the beta-casein family. Mammary gland specific. Secreted in milk.

It localises to the secreted. In terms of biological role, important role in determination of the surface properties of the casein micelles. This Capra hircus (Goat) protein is Beta-casein (CSN2).